Consider the following 378-residue polypeptide: Chorismate synthase (378 aa).

The tract at residues 42 to 61 (IQAELDRRRPGQSPITTPRQ) is disordered. An NADP(+)-binding site is contributed by arginine 49. Residues 126 to 128 (RAS), glycine 287, 302 to 306 (KPTAT), and arginine 328 each bind FMN.

It belongs to the chorismate synthase family. As to quaternary structure, homotetramer. FMNH2 serves as cofactor.

The enzyme catalyses 5-O-(1-carboxyvinyl)-3-phosphoshikimate = chorismate + phosphate. Its pathway is metabolic intermediate biosynthesis; chorismate biosynthesis; chorismate from D-erythrose 4-phosphate and phosphoenolpyruvate: step 7/7. Functionally, catalyzes the anti-1,4-elimination of the C-3 phosphate and the C-6 proR hydrogen from 5-enolpyruvylshikimate-3-phosphate (EPSP) to yield chorismate, which is the branch point compound that serves as the starting substrate for the three terminal pathways of aromatic amino acid biosynthesis. This reaction introduces a second double bond into the aromatic ring system. The protein is Chorismate synthase of Synechococcus sp. (strain JA-2-3B'a(2-13)) (Cyanobacteria bacterium Yellowstone B-Prime).